A 220-amino-acid polypeptide reads, in one-letter code: Probable nicotinate-nucleotide adenylyltransferase (220 aa).

It belongs to the NadD family.

The enzyme catalyses nicotinate beta-D-ribonucleotide + ATP + H(+) = deamido-NAD(+) + diphosphate. The protein operates within cofactor biosynthesis; NAD(+) biosynthesis; deamido-NAD(+) from nicotinate D-ribonucleotide: step 1/1. In terms of biological role, catalyzes the reversible adenylation of nicotinate mononucleotide (NaMN) to nicotinic acid adenine dinucleotide (NaAD). The sequence is that of Probable nicotinate-nucleotide adenylyltransferase from Yersinia pseudotuberculosis serotype O:1b (strain IP 31758).